The sequence spans 112 residues: S-adenosylmethionine decarboxylase proenzyme (112 aa).

Ser-62 (schiff-base intermediate with substrate; via pyruvic acid) is an active-site residue. A Pyruvic acid (Ser); by autocatalysis modification is found at Ser-62. His-67 functions as the Proton acceptor; for processing activity in the catalytic mechanism. Cys-82 serves as the catalytic Proton donor; for catalytic activity.

The protein belongs to the prokaryotic AdoMetDC family. Type 1 subfamily. As to quaternary structure, heterotetramer of two alpha and two beta chains arranged as a dimer of alpha/beta heterodimers. Requires pyruvate as cofactor. Post-translationally, is synthesized initially as an inactive proenzyme. Formation of the active enzyme involves a self-maturation process in which the active site pyruvoyl group is generated from an internal serine residue via an autocatalytic post-translational modification. Two non-identical subunits are generated from the proenzyme in this reaction, and the pyruvate is formed at the N-terminus of the alpha chain, which is derived from the carboxyl end of the proenzyme. The post-translation cleavage follows an unusual pathway, termed non-hydrolytic serinolysis, in which the side chain hydroxyl group of the serine supplies its oxygen atom to form the C-terminus of the beta chain, while the remainder of the serine residue undergoes an oxidative deamination to produce ammonia and the pyruvoyl group blocking the N-terminus of the alpha chain.

It carries out the reaction S-adenosyl-L-methionine + H(+) = S-adenosyl 3-(methylsulfanyl)propylamine + CO2. It participates in amine and polyamine biosynthesis; S-adenosylmethioninamine biosynthesis; S-adenosylmethioninamine from S-adenosyl-L-methionine: step 1/1. In terms of biological role, catalyzes the decarboxylation of S-adenosylmethionine to S-adenosylmethioninamine (dcAdoMet), the propylamine donor required for the synthesis of the polyamines spermine and spermidine from the diamine putrescine. In Archaeoglobus fulgidus (strain ATCC 49558 / DSM 4304 / JCM 9628 / NBRC 100126 / VC-16), this protein is S-adenosylmethionine decarboxylase proenzyme.